The primary structure comprises 344 residues: Heat-inducible transcription repressor HrcA (344 aa).

Belongs to the HrcA family.

Functionally, negative regulator of class I heat shock genes (grpE-dnaK-dnaJ and groELS operons). Prevents heat-shock induction of these operons. The polypeptide is Heat-inducible transcription repressor HrcA (Streptococcus sanguinis (strain SK36)).